A 614-amino-acid chain; its full sequence is Kelch-like protein 40 (614 aa).

Residues 33-100 enclose the BTB domain; that stretch reads IDCVLKIQGK…IYTSEIEITE (68 aa). The BACK domain occupies 135 to 237; the sequence is CLAIFRLGLL…PQDYIKNKVE (103 aa). 5 Kelch repeats span residues 353–405, 406–455, 456–503, 505–550, and 552–606; these read QLFV…ESDN, SIYL…SHDN, LVYV…VHKG, ILIA…SMNG, and LYAI…AARL.

It belongs to the KLHL40 family. In terms of assembly, component of the BCR(KLHL40) E3 ubiquitin ligase complex.

It is found in the cytoplasm. The protein resides in the myofibril. The protein localises to the sarcomere. It localises to the a band. Its subcellular location is the i band. Functionally, substrate-specific adapter of a BCR (BTB-CUL3-RBX1) E3 ubiquitin ligase complex that acts as a key regulator of skeletal muscle development. This chain is Kelch-like protein 40 (klhl40), found in Xenopus tropicalis (Western clawed frog).